The chain runs to 559 residues: MLPGILLCSLNPRNHSKKKKSERESLETEPKDIDYWYSVQFNRDPPRFALKSENNNHHSRSKSGGDFCKKKKRGEMANKVSNFSDLIQRVTASCLLHPLSAGRQDLAVNRREEYDTEEEENEEEGEIQYEDALEKENGKDETIRAKNGRNGVSVETVQEMEMVMDEVFTAAAAMKRAYVALQEAHSPWDPEKMHDADMAMVAELRRIGSLRERFRRMRGTGSGGRRKNDAGRGMLREAVAPYEAVVKELKKEVKVKDTEIENLKEKVKVASMANGNGGKKHRLLSSRKVNCTTQIAVSPVPELFEMTMIQVKEASKSFTGILLSLMRAAHWDIAAAVRSIEAASASSDGMSASSFASSVQSSVPNQHAKFALESYICRKIFQGFDHETFYMDGSLSSLINPDQYRRDCFAQFKDMKAMDPMELLGILPTCHFGKFCSKKYLSIIHQKMEESLFGDSEQRELVVAGNHPRSQFYGEFLGLAKAVWLLHLLAFSLDPSPSHFEANRGAEFHSQYMESVVRFSDGRVPAGQVVGFPVCPGFKLSHQGKGSIIKSRVYLVPRA.

The interval 107 to 127 (AVNRREEYDTEEEENEEEGEI) is disordered. Residues 114–127 (YDTEEEENEEEGEI) show a composition bias toward acidic residues.

Functionally, required for red (R) and far red (FR) light-induced and phytochrome-mediated deregulation of negative gravitropism leading to randomization of hypocotyl growth orientation. In Arabidopsis thaliana (Mouse-ear cress), this protein is Protein GRAVITROPIC IN THE LIGHT 1.